We begin with the raw amino-acid sequence, 495 residues long: Probable cytosol aminopeptidase (495 aa).

Residues Lys266 and Asp271 each contribute to the Mn(2+) site. The active site involves Lys278. Mn(2+) is bound by residues Asp289, Asp348, and Glu350. Residue Arg352 is part of the active site.

Belongs to the peptidase M17 family. Requires Mn(2+) as cofactor.

It is found in the cytoplasm. It catalyses the reaction Release of an N-terminal amino acid, Xaa-|-Yaa-, in which Xaa is preferably Leu, but may be other amino acids including Pro although not Arg or Lys, and Yaa may be Pro. Amino acid amides and methyl esters are also readily hydrolyzed, but rates on arylamides are exceedingly low.. It carries out the reaction Release of an N-terminal amino acid, preferentially leucine, but not glutamic or aspartic acids.. Functionally, presumably involved in the processing and regular turnover of intracellular proteins. Catalyzes the removal of unsubstituted N-terminal amino acids from various peptides. The polypeptide is Probable cytosol aminopeptidase (Pseudomonas aeruginosa (strain UCBPP-PA14)).